The following is a 59-amino-acid chain: Conotoxin Cl14.4 (59 aa).

An N-terminal signal peptide occupies residues 1-19 (MKFLLFLSVALLLTSFIET). Residues 20–36 (VTVNKAGMERPSRALVG) constitute a propeptide that is removed on maturation. Isoleucine 58 bears the Isoleucine amide mark.

Post-translationally, contains 2 disulfide bonds. Expressed by the venom duct.

The protein localises to the secreted. The polypeptide is Conotoxin Cl14.4 (Californiconus californicus (California cone)).